Reading from the N-terminus, the 148-residue chain is uncharacterized protein (148 aa).

Positions 21, 24, 88, and 117 each coordinate [4Fe-4S] cluster.

Belongs to the complex I 20 kDa subunit family. Requires [4Fe-4S] cluster as cofactor.

This is an uncharacterized protein from Methanocaldococcus jannaschii (strain ATCC 43067 / DSM 2661 / JAL-1 / JCM 10045 / NBRC 100440) (Methanococcus jannaschii).